We begin with the raw amino-acid sequence, 321 residues long: Sideroflexin-3 (321 aa).

Residue M1 is modified to N-acetylmethionine. The next 4 helical transmembrane spans lie at 146–164 (LGTA…ALGL), 174–194 (LVGR…NIPL), 225–245 (IFQV…IPPV), and 266–286 (LQVG…CALF).

Belongs to the sideroflexin family.

It localises to the mitochondrion membrane. It catalyses the reaction L-serine(in) = L-serine(out). Functionally, mitochondrial serine transporter that mediates transport of serine into mitochondria, an important step of the one-carbon metabolism pathway. Mitochondrial serine is converted to glycine and formate, which then exits to the cytosol where it is used to generate the charged folates that serve as one-carbon donors. The sequence is that of Sideroflexin-3 (Sfxn3) from Rattus norvegicus (Rat).